Here is a 617-residue protein sequence, read N- to C-terminus: Proline--tRNA ligase (617 aa).

This sequence belongs to the class-II aminoacyl-tRNA synthetase family. ProS type 1 subfamily. In terms of assembly, homodimer.

The protein localises to the cytoplasm. The enzyme catalyses tRNA(Pro) + L-proline + ATP = L-prolyl-tRNA(Pro) + AMP + diphosphate. In terms of biological role, catalyzes the attachment of proline to tRNA(Pro) in a two-step reaction: proline is first activated by ATP to form Pro-AMP and then transferred to the acceptor end of tRNA(Pro). As ProRS can inadvertently accommodate and process non-cognate amino acids such as alanine and cysteine, to avoid such errors it has two additional distinct editing activities against alanine. One activity is designated as 'pretransfer' editing and involves the tRNA(Pro)-independent hydrolysis of activated Ala-AMP. The other activity is designated 'posttransfer' editing and involves deacylation of mischarged Ala-tRNA(Pro). The misacylated Cys-tRNA(Pro) is not edited by ProRS. The protein is Proline--tRNA ligase of Streptococcus pneumoniae (strain Hungary19A-6).